The primary structure comprises 382 residues: MIASTGKTNLLGLTQQEMEKFFDSIGEKRFRAGQVMKWIHHFGVDDFDAMTNVSKALREKLKACAEVRGPEVVSEDISSDGTRKWVVRVESGSCVETVYIPQGKRGTLCVSSQAGCALDCSFCSTGKQGFNSNLTAAEVIGQVWIANKSFGSVPATVDRAITNVVMMGMGEPLLNFDNVIAAMHLMMDDLGYGISKRRVTLSTSGVVPMIDELSKHIDVSLALSLHAPNDALRNQLVPLNKKYPLKVLLESCRRYMSSLGEKRVLTIEYTMLKDINDKVEHAVEMIELLKDTPCKINLIPFNPFPHSGYERPSNNAIRRFQDLLHQAGYNVTVRTTRGEDIDAACGQLVGQVMDRTRRSERYIAVRELSADVDTAPAAATRT.

The Proton acceptor role is filled by E96. The Radical SAM core domain maps to 102-342 (QGKRGTLCVS…VRTTRGEDID (241 aa)). The cysteines at positions 109 and 345 are disulfide-linked. C116, C120, and C123 together coordinate [4Fe-4S] cluster. Residues 170 to 171 (GE), S202, 224 to 226 (SLH), and N302 each bind S-adenosyl-L-methionine. The active-site S-methylcysteine intermediate is C345.

This sequence belongs to the radical SAM superfamily. RlmN family. [4Fe-4S] cluster serves as cofactor.

It localises to the cytoplasm. The catalysed reaction is adenosine(2503) in 23S rRNA + 2 reduced [2Fe-2S]-[ferredoxin] + 2 S-adenosyl-L-methionine = 2-methyladenosine(2503) in 23S rRNA + 5'-deoxyadenosine + L-methionine + 2 oxidized [2Fe-2S]-[ferredoxin] + S-adenosyl-L-homocysteine. It catalyses the reaction adenosine(37) in tRNA + 2 reduced [2Fe-2S]-[ferredoxin] + 2 S-adenosyl-L-methionine = 2-methyladenosine(37) in tRNA + 5'-deoxyadenosine + L-methionine + 2 oxidized [2Fe-2S]-[ferredoxin] + S-adenosyl-L-homocysteine. Its function is as follows. Specifically methylates position 2 of adenine 2503 in 23S rRNA and position 2 of adenine 37 in tRNAs. m2A2503 modification seems to play a crucial role in the proofreading step occurring at the peptidyl transferase center and thus would serve to optimize ribosomal fidelity. The polypeptide is Dual-specificity RNA methyltransferase RlmN (Pseudomonas syringae pv. tomato (strain ATCC BAA-871 / DC3000)).